We begin with the raw amino-acid sequence, 110 residues long: BET1-like protein (110 aa).

The Cytoplasmic segment spans residues 1 to 85 (MADPWNRGHG…MVRSGRDNRK (85 aa)). A t-SNARE coiled-coil homology domain is found at 14–76 (DMLDAENKRM…TGSVKRFSTM (63 aa)). A helical; Anchor for type IV membrane protein membrane pass occupies residues 86–106 (ILCYVSVGLVVAFFLLYYLVS). The Lumenal portion of the chain corresponds to 107 to 110 (RMQN).

As to quaternary structure, component of a SNARE complex consisting of stx5, ykt6, gosr2 and bet1l.

The protein resides in the golgi apparatus membrane. Functionally, vesicle SNARE required for targeting and fusion of retrograde transport vesicles with the Golgi complex. Required for the integrity of the Golgi complex. The protein is BET1-like protein (bet1l) of Danio rerio (Zebrafish).